Reading from the N-terminus, the 197-residue chain is Small ribosomal subunit protein uS5 (197 aa).

Residues 1–27 (MAEREQRGGRDQRGGGRERKEREERDS) form a disordered region. In terms of domain architecture, S5 DRBM spans 29–92 (FVDKLVHINR…ESAKRNLTRV (64 aa)).

This sequence belongs to the universal ribosomal protein uS5 family. Part of the 30S ribosomal subunit. Contacts proteins S4 and S8.

In terms of biological role, with S4 and S12 plays an important role in translational accuracy. Functionally, located at the back of the 30S subunit body where it stabilizes the conformation of the head with respect to the body. The chain is Small ribosomal subunit protein uS5 from Bradyrhizobium diazoefficiens (strain JCM 10833 / BCRC 13528 / IAM 13628 / NBRC 14792 / USDA 110).